Here is a 158-residue protein sequence, read N- to C-terminus: uncharacterized protein (158 aa).

2 consecutive transmembrane segments (helical) span residues 66–86 (LLII…PWIM) and 94–114 (FFSL…SLTI).

It is found in the membrane. This is an uncharacterized protein from Saccharomyces cerevisiae (strain ATCC 204508 / S288c) (Baker's yeast).